The following is a 378-amino-acid chain: Chorismate synthase (378 aa).

NADP(+) is bound by residues Arg-48 and Arg-54. Residues 125 to 127 (RSS), 238 to 239 (NA), Gly-278, 293 to 297 (KPTSS), and Arg-319 contribute to the FMN site.

Belongs to the chorismate synthase family. In terms of assembly, homotetramer. FMNH2 is required as a cofactor.

The catalysed reaction is 5-O-(1-carboxyvinyl)-3-phosphoshikimate = chorismate + phosphate. It participates in metabolic intermediate biosynthesis; chorismate biosynthesis; chorismate from D-erythrose 4-phosphate and phosphoenolpyruvate: step 7/7. In terms of biological role, catalyzes the anti-1,4-elimination of the C-3 phosphate and the C-6 proR hydrogen from 5-enolpyruvylshikimate-3-phosphate (EPSP) to yield chorismate, which is the branch point compound that serves as the starting substrate for the three terminal pathways of aromatic amino acid biosynthesis. This reaction introduces a second double bond into the aromatic ring system. In Azoarcus sp. (strain BH72), this protein is Chorismate synthase.